We begin with the raw amino-acid sequence, 239 residues long: 1-(5-phosphoribosyl)-5-[(5-phosphoribosylamino)methylideneamino] imidazole-4-carboxamide isomerase (239 aa).

The active-site Proton acceptor is the aspartate 9. Aspartate 131 acts as the Proton donor in catalysis.

Belongs to the HisA/HisF family.

It is found in the cytoplasm. It carries out the reaction 1-(5-phospho-beta-D-ribosyl)-5-[(5-phospho-beta-D-ribosylamino)methylideneamino]imidazole-4-carboxamide = 5-[(5-phospho-1-deoxy-D-ribulos-1-ylimino)methylamino]-1-(5-phospho-beta-D-ribosyl)imidazole-4-carboxamide. Its pathway is amino-acid biosynthesis; L-histidine biosynthesis; L-histidine from 5-phospho-alpha-D-ribose 1-diphosphate: step 4/9. In Bacteroides fragilis (strain ATCC 25285 / DSM 2151 / CCUG 4856 / JCM 11019 / LMG 10263 / NCTC 9343 / Onslow / VPI 2553 / EN-2), this protein is 1-(5-phosphoribosyl)-5-[(5-phosphoribosylamino)methylideneamino] imidazole-4-carboxamide isomerase.